The sequence spans 577 residues: Zinc finger-containing ubiquitin peptidase 1 (577 aa).

Residues 2–24 form a C2H2-type 1 zinc finger; sequence LSCDICGETVTSEPDRKAHLIVH. The C2H2-type 2; atypical zinc-finger motif lies at 29–52; sequence IICPFCKLSGINYNEMCFHIETAH. 2 C2H2-type zinc fingers span residues 153 to 176 and 192 to 214; these read PECP…KTKH and YDCP…VDLH. Residues 225 to 247 are MIU; sequence DRVQCSSDRELAHQLQQEEERKR. Positions 231–261 are enriched in basic and acidic residues; that stretch reads SDRELAHQLQQEEERKRKSEESRQEREEFQK. The tract at residues 231 to 262 is disordered; it reads SDRELAHQLQQEEERKRKSEESRQEREEFQKL. A zUBD/ZHA region spans residues 248-273; that stretch reads KSEESRQEREEFQKLQRQYGLDNSGG. Position 261 is an N6-acetyllysine (Lys261). The active-site Nucleophile is Cys359. The Proton acceptor role is filled by His490. Asp511 is a catalytic residue.

It belongs to the peptidase C78 family. ZUFSP subfamily. As to quaternary structure, interacts with RPA1 and RPA2.

It is found in the cytoplasm. Its subcellular location is the nucleus. The enzyme catalyses Thiol-dependent hydrolysis of ester, thioester, amide, peptide and isopeptide bonds formed by the C-terminal Gly of ubiquitin (a 76-residue protein attached to proteins as an intracellular targeting signal).. Its function is as follows. Deubiquitinase with endodeubiquitinase activity that specifically interacts with and cleaves 'Lys-63'-linked long polyubiquitin chains. Shows only weak activity against 'Lys-11' and 'Lys-48'-linked chains. Plays an important role in genome stability pathways, functioning to prevent spontaneous DNA damage and also promote cellular survival in response to exogenous DNA damage. Modulates the ubiquitination status of replication protein A (RPA) complex proteins in response to replication stress. This chain is Zinc finger-containing ubiquitin peptidase 1, found in Rattus norvegicus (Rat).